The sequence spans 457 residues: Putative adhesion G protein-coupled receptor E4P (457 aa).

The N-terminal stretch at 1–14 (MGSRFLLVLLSGAS) is a signal peptide. 6 cysteine pairs are disulfide-bonded: C15/C24, C18/C30, C32/C52, C58/C71, C65/C80, and C82/C103. In terms of domain architecture, EGF-like 1 spans 15-53 (CPPCPKYASCHNSTHCTCEDGFRARSGRTYFHDSSEKCE). The Extracellular portion of the chain corresponds to 16–191 (PPCPKYASCH…LAPKEDPVLT (176 aa)). An N-linked (GlcNAc...) asparagine glycan is attached at N26. The region spanning 54–104 (DINECETGLAKCKYKAYCRNKVGGYICSCLVKYTLFNFLAGIIDYDHPDCY) is the EGF-like 2; calcium-binding domain. Residues N106 and N162 are each glycosylated (N-linked (GlcNAc...) asparagine). One can recognise a GAIN-B domain in the interval 134 to 186 (DKRTKHICVYWEGSEGGWSTEGCSHVHSNGSYTKCKCFHLSSFAVLVALAPKE). Disulfide bonds link C141–C168 and C156–C170. Residues 141 to 186 (CVYWEGSEGGWSTEGCSHVHSNGSYTKCKCFHLSSFAVLVALAPKE) form a GPS region. Residues 192 to 212 (VITQVGLTISLLCLFLAILTF) traverse the membrane as a helical segment. Residues 213 to 223 (LLCRPIQNTST) lie on the Cytoplasmic side of the membrane. The chain crosses the membrane as a helical span at residues 224-244 (SLHLELSLCLFLAHLLFLTGI). Residue N245 is glycosylated (N-linked (GlcNAc...) asparagine). Topologically, residues 245–250 (NRTEPE) are extracellular. The chain crosses the membrane as a helical span at residues 251–271 (VLCSIIAGLLHFLYLACFTWM). Residues 272–299 (LLEGLHLFLTVRNLKVANYTSTGRFKKR) are Cytoplasmic-facing. The helical transmembrane segment at 300–320 (FMYPVGYGIPAVIIAVSAIVG) threads the bilayer. At 321-336 (PQNYGTFTCWLKLDKG) the chain is on the extracellular side. A helical membrane pass occupies residues 337–357 (FIWSFMGPVAVIILINLVFYF). The Cytoplasmic segment spans residues 358–384 (QVLWILRSKLSSLNKEVSTIQDTRVMT). A helical transmembrane segment spans residues 385 to 405 (FKAISQLFILGCSWGLGFFMV). Residues 406–413 (EEVGKTIG) are Extracellular-facing. The helical transmembrane segment at 414-434 (SIIAYSFTIINTLQGVLLFVV) threads the bilayer. Residues 435-457 (HCLLNRQVRLIILSVISLVPKSN) are Cytoplasmic-facing.

This sequence belongs to the G-protein coupled receptor 2 family. Adhesion G-protein coupled receptor (ADGR) subfamily. As to quaternary structure, forms a heterodimer, consisting of a large extracellular region (alpha subunit) non-covalently linked to a seven-transmembrane moiety (beta subunit). Post-translationally, glycosylated. Proteolytically cleaved into 2 subunits, an extracellular alpha subunit and a seven-transmembrane subunit.

It localises to the cell membrane. Its subcellular location is the secreted. May mediate the cellular interaction between myeloid cells and B-cells. The chain is Putative adhesion G protein-coupled receptor E4P from Homo sapiens (Human).